The sequence spans 293 residues: Ribosomal protein L11 methyltransferase (293 aa).

The S-adenosyl-L-methionine site is built by Thr145, Gly166, Asp188, and Asn230.

This sequence belongs to the methyltransferase superfamily. PrmA family.

It localises to the cytoplasm. It carries out the reaction L-lysyl-[protein] + 3 S-adenosyl-L-methionine = N(6),N(6),N(6)-trimethyl-L-lysyl-[protein] + 3 S-adenosyl-L-homocysteine + 3 H(+). Its function is as follows. Methylates ribosomal protein L11. The polypeptide is Ribosomal protein L11 methyltransferase (Escherichia coli O8 (strain IAI1)).